The sequence spans 280 residues: 30 kDa immediate-early protein 2 (280 aa).

The segment at S36–D164 is disordered. Low complexity-rich tracts occupy residues R47–T67, S90–D101, and A132–G147.

Functionally, activates the E1.7 promoter. This activation is augmented by the IE1 protein. It down-regulates the transcription of genes under the control of the major IE promoter. The chain is 30 kDa immediate-early protein 2 (UL122) from Human cytomegalovirus (strain Towne) (HHV-5).